Reading from the N-terminus, the 422-residue chain is Osteomodulin (422 aa).

A signal peptide spans 1–20 (MGFSSLVCVLFFFLGVKVYC). A propeptide spanning residues 21–27 (QYESYQW) is cleaved from the precursor. 6 positions are modified to sulfotyrosine: Tyr22, Tyr25, Tyr31, Tyr39, Tyr51, and Tyr77. The LRRNT domain maps to 53–91 (APFHQHTLGCASECFCPPNFPSSMYCDNRKLKTIPNIPA). LRR repeat units lie at residues 92–113 (HIQQ…SFIN), 116–129 (HLKE…KIKS), 142–164 (NLLQ…PKSL), 165–184 (ERIF…AVNG), 187–207 (NLTM…QEKV), 213–233 (KLMQ…GLPS), 234–255 (SLMY…YFNK), 258–280 (KLHA…FNLS), 281–294 (NLIE…KLKQ), 301–322 (NLEH…VMCP), and 331–353 (HLTH…IFLC). N-linked (GlcNAc...) asparagine glycans are attached at residues Asn113 and Asn121. An N-linked (GlcNAc...) asparagine glycan is attached at Asn187. Asn242 and Asn278 each carry an N-linked (GlcNAc...) asparagine glycan. The N-linked (GlcNAc...) asparagine glycan is linked to Asn316. An intrachain disulfide couples Cys321 to Cys353. Residues 385–422 (DDGDSEDHDDHHEGPEEEGTEENIDAHYYGSQEWQETI) form a disordered region. Sulfotyrosine is present on residues Tyr412 and Tyr413.

This sequence belongs to the small leucine-rich proteoglycan (SLRP) family. SLRP class II subfamily. Binds the alpha(V)beta(3)-integrin. The N-terminus is blocked. In terms of processing, glycosylated; contains keratan sulfate. Post-translationally, sulfated on tyrosine residue(s). As to expression, bone specific (at protein level).

Its subcellular location is the secreted. The protein resides in the extracellular space. The protein localises to the extracellular matrix. In terms of biological role, may be implicated in biomineralization processes. Has a function in binding of osteoblasts via the alpha(V)beta(3)-integrin. The polypeptide is Osteomodulin (OMD) (Bos taurus (Bovine)).